The sequence spans 166 residues: Large ribosomal subunit protein uL10 (166 aa).

The protein belongs to the universal ribosomal protein uL10 family. As to quaternary structure, part of the ribosomal stalk of the 50S ribosomal subunit. The N-terminus interacts with L11 and the large rRNA to form the base of the stalk. The C-terminus forms an elongated spine to which L12 dimers bind in a sequential fashion forming a multimeric L10(L12)X complex.

Functionally, forms part of the ribosomal stalk, playing a central role in the interaction of the ribosome with GTP-bound translation factors. The chain is Large ribosomal subunit protein uL10 from Bacillus pumilus (strain SAFR-032).